A 515-amino-acid polypeptide reads, in one-letter code: Leucine-rich repeat transmembrane neuronal protein 2 (515 aa).

Residues 1–33 (MGLHFKWPLGAPMLAAIYAMSVVLKMLPALGMA) form the signal peptide. The Extracellular portion of the chain corresponds to 34 to 421 (CPPKCRCEKL…EPDNAIFTQR (388 aa)). Asn57 carries an N-linked (GlcNAc...) asparagine glycan. 10 LRR repeats span residues 61–83 (KGSL…QFAS), 84–107 (FSQL…AFQG), 109–131 (YKLK…TFTQ), 132–155 (LINL…LFYG), 156–179 (LRKL…LFWD), 181–203 (RSLE…GFAG), 205–227 (IKLR…HFLR), 229–251 (SSLH…MEWT), 252–275 (WSTL…VFET), and 276–299 (MPNL…ILSS). Residue Asn126 is glycosylated (N-linked (GlcNAc...) asparagine). A glycan (N-linked (GlcNAc...) asparagine) is linked at Asn243. Residue Asn362 is glycosylated (N-linked (GlcNAc...) asparagine). Residues 422–442 (VITGTMALLFSFFFIIFIVFI) traverse the membrane as a helical segment. At 443 to 515 (SRKCCPPTLR…QQLPYKECEV (73 aa)) the chain is on the cytoplasmic side. The Involved in DLG4-binding signature appears at 512-515 (ECEV).

This sequence belongs to the LRRTM family. As to quaternary structure, interacts with DLG4. Interacts with neurexin NRXN1; interaction is mediated by heparan sulfate glycan modification on neurexin. Expressed in neuronal tissues. Widely distributed in neuropil regions in discrete puncta throughout the brain (at protein level). Detected in cortex, thalamus, striatum, olfactory bulb, cerebellum and all hippocampal subfields (at protein level). More abundant in deep than in superficial layers of neocortex (at protein level).

The protein resides in the cell membrane. It localises to the postsynaptic cell membrane. Its function is as follows. Involved in the development and maintenance of excitatory synapses in the nervous system. Regulates surface expression of AMPA receptors and instructs the development of functional glutamate release sites. Acts as a ligand for the presynaptic receptors NRXN1-A and NRXN1-B. In Rattus norvegicus (Rat), this protein is Leucine-rich repeat transmembrane neuronal protein 2 (Lrrtm2).